The sequence spans 74 residues: Auswaprin-a (74 aa).

Positions 1–24 (MSSGGLLLLLGLLTLWGVLTPVSS) are cleaved as a signal peptide. Positions 27-71 (RPKKPGLCPPRPQKPCVKECKNDWSCSGQQKCCNYGCIDECRDPI) constitute a WAP domain. Cystine bridges form between Cys-34-Cys-59, Cys-42-Cys-63, Cys-46-Cys-58, and Cys-52-Cys-67.

The protein belongs to the venom waprin family. As to expression, expressed by the venom gland.

The protein resides in the secreted. Its function is as follows. Damages membranes of susceptible bacteria. Has no hemolytic activity. Not toxic to mice. Does not inhibit the proteinases elastase and cathepsin G. In Pseudechis australis (Mulga snake), this protein is Auswaprin-a.